The sequence spans 1028 residues: Collagen alpha-1(VI) chain (1028 aa).

A signal peptide spans 1-19 (MRAARALLPLLLQACWTAA). An N-terminal globular domain region spans residues 20 to 256 (QDEPETPRAV…CCSFECQPAR (237 aa)). In terms of domain architecture, VWFA 1 spans 37–235 (DLFFVLDTSE…EAISQTIDTI (199 aa)). N-linked (GlcNAc...) asparagine glycosylation is present at asparagine 212. Positions 254 to 590 (PARGPPGLRG…GPPGHQGPPG (337 aa)) are disordered. The segment at 257 to 592 (GPPGLRGDPG…PGHQGPPGPD (336 aa)) is triple-helical region. A Cell attachment site motif is present at residues 262–264 (RGD). 2 stretches are compositionally biased toward basic and acidic residues: residues 268-285 (EGER…EAGD) and 301-334 (KGEK…DGVK). Positions 384–394 (RPGSSGPSGDE) are enriched in low complexity. The short motif at 442-444 (RGD) is the Cell attachment site element. The span at 457 to 471 (EGPVGVPGDPGEAGP) shows a compositional bias: low complexity. A Cell attachment site motif is present at residues 478–480 (RGD). Low complexity predominate over residues 483–493 (PPGSEGARGAP). 2 N-linked (GlcNAc...) asparagine glycosylation sites follow: asparagine 516 and asparagine 537. A compositionally biased stretch (acidic residues) spans 550-560 (GEAGDPGDDNN). The segment covering 579–590 (PQGPPGHQGPPG) has biased composition (pro residues). A C-terminal globular domain region spans residues 593 to 1028 (ECEILDIIMK…QTVSRKVALG (436 aa)). 2 VWFA domains span residues 615–805 (DLLF…LKNV) and 829–1021 (DITI…HQTV). 2 N-linked (GlcNAc...) asparagine glycosylation sites follow: asparagine 804 and asparagine 896.

Belongs to the type VI collagen family. As to quaternary structure, trimers composed of three different chains: alpha-1(VI), alpha-2(VI), and alpha-3(VI) or alpha-5(VI) or alpha-6(VI). Post-translationally, prolines at the third position of the tripeptide repeating unit (G-X-Y) are hydroxylated in some or all of the chains.

Its subcellular location is the secreted. It is found in the extracellular space. It localises to the extracellular matrix. Collagen VI acts as a cell-binding protein. The protein is Collagen alpha-1(VI) chain (COL6A1) of Homo sapiens (Human).